The chain runs to 467 residues: Ribosomal RNA small subunit methyltransferase F (467 aa).

S-adenosyl-L-methionine contacts are provided by residues 119–125, Glu143, Asp170, and Asp188; that span reads ASAPGSK. Cys241 serves as the catalytic Nucleophile.

Belongs to the class I-like SAM-binding methyltransferase superfamily. RsmB/NOP family.

The protein localises to the cytoplasm. The enzyme catalyses cytidine(1407) in 16S rRNA + S-adenosyl-L-methionine = 5-methylcytidine(1407) in 16S rRNA + S-adenosyl-L-homocysteine + H(+). Its function is as follows. Specifically methylates the cytosine at position 1407 (m5C1407) of 16S rRNA. This Shewanella amazonensis (strain ATCC BAA-1098 / SB2B) protein is Ribosomal RNA small subunit methyltransferase F.